A 183-amino-acid chain; its full sequence is Potassium-transporting ATPase KdpC subunit (183 aa).

Residues 11–31 (LALLMTLLTGVLYPLAVTGVA) form a helical membrane-spanning segment.

Belongs to the KdpC family. The system is composed of three essential subunits: KdpA, KdpB and KdpC.

It localises to the cell inner membrane. Its function is as follows. Part of the high-affinity ATP-driven potassium transport (or Kdp) system, which catalyzes the hydrolysis of ATP coupled with the electrogenic transport of potassium into the cytoplasm. This subunit acts as a catalytic chaperone that increases the ATP-binding affinity of the ATP-hydrolyzing subunit KdpB by the formation of a transient KdpB/KdpC/ATP ternary complex. This is Potassium-transporting ATPase KdpC subunit from Pseudomonas putida (strain GB-1).